The primary structure comprises 484 residues: MQSRMQGQRTLQLRQNSCIQPKWISQKNFTFGAATSAYQVEGAAHRALNGWDYFTHRYPERVSDRSIGDLACNSYDLYKDDVKLLKRMNVQAYRFSIAWSRVLPKGRLIGGVDENGITYYNNLINELKANGIEPFVTIFHWDVPQDFRRRIWRLLKPTYSDFKNYAELLFQRFGDRVKFWITLNQPYSLAVKGYGDGQYPPGRCTDCEFGGDSGTEPYIVGHHELLAHMEAVSLYRKRYQKFQGGKIGTTLIGRWFIPLNETNDLDKAAAKREFDFSVLGSTGVRTISKDNERLGDRLPKFTPKQSALLKGSLDFLGLNYYVTRYATYRPPPMPTQHSVLTDSGVTIGFERNGVSIGVKASINFDVKDLRHLVDFFLFVELLLLSTRIPSDSKSHQKQELLMLIANALADNGRIQFQCSHLSCLKCAIEDGCNVAGYFAWSLMDNYEFGNGYTLRFDMNWVNFTNPADRREKASGKWFSRFIAK.

Asparagine 28 carries an N-linked (GlcNAc...) asparagine glycan. A beta-D-glucoside contacts are provided by residues glutamine 39, histidine 140, and 184–185; that span reads NQ. Cysteine 204 and cysteine 207 form a disulfide bridge. N-linked (GlcNAc...) asparagine glycosylation is present at asparagine 260. Residues tyrosine 321, tryptophan 440, 447–448, and phenylalanine 456 each bind a beta-D-glucoside; that span reads EF. N-linked (GlcNAc...) asparagine glycosylation occurs at asparagine 462.

It belongs to the glycosyl hydrolase 1 family.

The enzyme catalyses a thioglucoside + H2O = a sugar + a thiol.. This chain is Putative myrosinase 6, found in Arabidopsis thaliana (Mouse-ear cress).